Reading from the N-terminus, the 248-residue chain is Cell division protein FtsQ (248 aa).

Topologically, residues 1–4 (MGTR) are cytoplasmic. The chain crosses the membrane as a helical span at residues 5–25 (LRALLGVLILLVLGGAGWLFL). Over 26–248 (RWEPTLLPIR…RVAARAGNRR (223 aa)) the chain is Periplasmic. A POTRA domain is found at 32–101 (LPIRLIQIEG…DTLRVQVREY (70 aa)).

Belongs to the FtsQ/DivIB family. FtsQ subfamily. Part of a complex composed of FtsB, FtsL and FtsQ.

The protein resides in the cell inner membrane. Its function is as follows. Essential cell division protein. May link together the upstream cell division proteins, which are predominantly cytoplasmic, with the downstream cell division proteins, which are predominantly periplasmic. May control correct divisome assembly. This Allochromatium vinosum (strain ATCC 17899 / DSM 180 / NBRC 103801 / NCIMB 10441 / D) (Chromatium vinosum) protein is Cell division protein FtsQ.